Consider the following 490-residue polypeptide: Protein nucleotidyltransferase YdiU (490 aa).

Residues G89, G91, R92, K112, D124, G125, R175, and R182 each coordinate ATP. The active-site Proton acceptor is the D251. 2 residues coordinate Mg(2+): N252 and D261. D261 provides a ligand contact to ATP.

Belongs to the SELO family. Mg(2+) serves as cofactor. The cofactor is Mn(2+).

The enzyme catalyses L-seryl-[protein] + ATP = 3-O-(5'-adenylyl)-L-seryl-[protein] + diphosphate. The catalysed reaction is L-threonyl-[protein] + ATP = 3-O-(5'-adenylyl)-L-threonyl-[protein] + diphosphate. It carries out the reaction L-tyrosyl-[protein] + ATP = O-(5'-adenylyl)-L-tyrosyl-[protein] + diphosphate. It catalyses the reaction L-histidyl-[protein] + UTP = N(tele)-(5'-uridylyl)-L-histidyl-[protein] + diphosphate. The enzyme catalyses L-seryl-[protein] + UTP = O-(5'-uridylyl)-L-seryl-[protein] + diphosphate. The catalysed reaction is L-tyrosyl-[protein] + UTP = O-(5'-uridylyl)-L-tyrosyl-[protein] + diphosphate. Nucleotidyltransferase involved in the post-translational modification of proteins. It can catalyze the addition of adenosine monophosphate (AMP) or uridine monophosphate (UMP) to a protein, resulting in modifications known as AMPylation and UMPylation. This is Protein nucleotidyltransferase YdiU from Vibrio vulnificus (strain CMCP6).